A 613-amino-acid chain; its full sequence is DBH-like monooxygenase protein 1 (613 aa).

The signal sequence occupies residues 1–19 (MCCWPLLLLWGLLPGTAAG). Residues 20 to 592 (GSGRTYPHRT…TSSSSSLHRD (573 aa)) are Lumenal-facing. Positions 35–148 (GKYWLGWSQR…STVRVIWAYH (114 aa)) constitute a DOMON domain. The N-linked (GlcNAc...) asparagine glycan is linked to N114. Residue Y203 is part of the active site. Intrachain disulfides connect C205–C257 and C242–C269. Cu cation-binding residues include H235 and H236. Residue N247 is glycosylated (N-linked (GlcNAc...) asparagine). Cu cation is bound by residues H307, H389, H391, and M464. Cystine bridges form between C364/C480, C368/C550, and C443/C465. H389 is an active-site residue. 2 N-linked (GlcNAc...) asparagine glycosylation sites follow: N476 and N517. Residues 593–613 (FSINLLVCLLLLSCTLSTKSL) traverse the membrane as a helical segment.

Belongs to the copper type II ascorbate-dependent monooxygenase family. Requires Cu(2+) as cofactor. N-glycosylated. In terms of tissue distribution, highly expressed in lung, kidney, brain and spinal cord.

The protein resides in the endoplasmic reticulum membrane. This is DBH-like monooxygenase protein 1 (MOXD1) from Homo sapiens (Human).